Here is a 552-residue protein sequence, read N- to C-terminus: 2-methyl-1,2-propanediol dehydrogenase (552 aa).

Belongs to the GMC oxidoreductase family. Requires FAD as cofactor.

It is found in the cytoplasm. The enzyme catalyses 2-methylpropane-1,2-diol + NAD(+) = 2-hydroxy-2-methylpropanal + NADH + H(+). Its function is as follows. Involved in the degradation of methyl tert-butyl ether (MTBE). Catalyzes the conversion of 2-methyl 1,2-propanediol (2-M1,2-PD) to hydroxyisobutyraldehyde. The protein is 2-methyl-1,2-propanediol dehydrogenase of Mycolicibacterium austroafricanum (Mycobacterium austroafricanum).